We begin with the raw amino-acid sequence, 119 residues long: MARVKRGVTTHARHKKVLKASKGFFGRSSTNYRIALERLEKSLQYAYRDRRVKKRDFRALWIQRINAAVREHGMTYSVFINGLKKAEIDMDRKVLAAIAFDDAAAFAEIVKKVQGALAA.

It belongs to the bacterial ribosomal protein bL20 family.

Binds directly to 23S ribosomal RNA and is necessary for the in vitro assembly process of the 50S ribosomal subunit. It is not involved in the protein synthesizing functions of that subunit. The protein is Large ribosomal subunit protein bL20 of Granulibacter bethesdensis (strain ATCC BAA-1260 / CGDNIH1).